We begin with the raw amino-acid sequence, 495 residues long: UDP-N-acetylmuramoyl-L-alanyl-D-glutamate--2,6-diaminopimelate ligase (495 aa).

S29 provides a ligand contact to UDP-N-acetyl-alpha-D-muramoyl-L-alanyl-D-glutamate. 111–117 (GTNGKTS) is a binding site for ATP. Residues 153–154 (TT), S180, Q186, and R188 contribute to the UDP-N-acetyl-alpha-D-muramoyl-L-alanyl-D-glutamate site. The residue at position 220 (K220) is an N6-carboxylysine. Residues R384, 408 to 411 (DNPR), G459, and E463 each bind meso-2,6-diaminopimelate. A Meso-diaminopimelate recognition motif motif is present at residues 408-411 (DNPR).

It belongs to the MurCDEF family. MurE subfamily. It depends on Mg(2+) as a cofactor. Post-translationally, carboxylation is probably crucial for Mg(2+) binding and, consequently, for the gamma-phosphate positioning of ATP.

The protein resides in the cytoplasm. The catalysed reaction is UDP-N-acetyl-alpha-D-muramoyl-L-alanyl-D-glutamate + meso-2,6-diaminopimelate + ATP = UDP-N-acetyl-alpha-D-muramoyl-L-alanyl-gamma-D-glutamyl-meso-2,6-diaminopimelate + ADP + phosphate + H(+). The protein operates within cell wall biogenesis; peptidoglycan biosynthesis. In terms of biological role, catalyzes the addition of meso-diaminopimelic acid to the nucleotide precursor UDP-N-acetylmuramoyl-L-alanyl-D-glutamate (UMAG) in the biosynthesis of bacterial cell-wall peptidoglycan. This chain is UDP-N-acetylmuramoyl-L-alanyl-D-glutamate--2,6-diaminopimelate ligase, found in Xanthomonas oryzae pv. oryzae (strain MAFF 311018).